A 513-amino-acid polypeptide reads, in one-letter code: 2,3-bisphosphoglycerate-independent phosphoglycerate mutase (513 aa).

Mn(2+)-binding residues include Asp-13 and Ser-63. The active-site Phosphoserine intermediate is the Ser-63. Residues His-124, 154-155 (RD), Arg-186, Arg-192, 262-265 (RADR), and Lys-335 each bind substrate. Mn(2+) is bound by residues Asp-402, His-406, Asp-443, His-444, and His-462.

The protein belongs to the BPG-independent phosphoglycerate mutase family. As to quaternary structure, monomer. The cofactor is Mn(2+).

The catalysed reaction is (2R)-2-phosphoglycerate = (2R)-3-phosphoglycerate. It functions in the pathway carbohydrate degradation; glycolysis; pyruvate from D-glyceraldehyde 3-phosphate: step 3/5. Its function is as follows. Catalyzes the interconversion of 2-phosphoglycerate and 3-phosphoglycerate. In Photobacterium profundum (strain SS9), this protein is 2,3-bisphosphoglycerate-independent phosphoglycerate mutase.